A 135-amino-acid polypeptide reads, in one-letter code: Small ribosomal subunit protein uS11 (135 aa).

Residues 1–22 form a disordered region; the sequence is MPPKSRTAAGAKKVRRKEKKNV.

This sequence belongs to the universal ribosomal protein uS11 family. As to quaternary structure, part of the 30S ribosomal subunit. Interacts with proteins S7 and S18. Binds to IF-3.

Located on the platform of the 30S subunit, it bridges several disparate RNA helices of the 16S rRNA. Forms part of the Shine-Dalgarno cleft in the 70S ribosome. In Nocardioides sp. (strain ATCC BAA-499 / JS614), this protein is Small ribosomal subunit protein uS11.